Consider the following 262-residue polypeptide: Catechol O-methyltransferase domain-containing protein 1 (262 aa).

A helical; Signal-anchor for type II membrane protein transmembrane segment spans residues Ala12 to Gly32. Residues Asp108, Gly110–Thr111, Ser116, Glu134, Val135, Ala163, Asp185, Asp187, and Tyr194 contribute to the S-adenosyl-L-methionine site.

It belongs to the class I-like SAM-binding methyltransferase superfamily. Cation-dependent O-methyltransferase family. As to quaternary structure, homodimer.

Its subcellular location is the membrane. Functionally, putative O-methyltransferase. In Mus musculus (Mouse), this protein is Catechol O-methyltransferase domain-containing protein 1 (Comtd1).